A 217-amino-acid polypeptide reads, in one-letter code: Lipid transferase CIDEA (217 aa).

In terms of domain architecture, CIDE-N spans 33-110 (PARPFRVSNH…ILEKGQKWTP (78 aa)). An amphipathic helix region spans residues 163-180 (CTSFKAVLRNLLRFMSYA).

It belongs to the CIDE family. Homodimer. Interacts with CIDEC. Directly interacts with CEBPB. Interacts with isoform CLSTN3beta of CLSTN3; inhibiting the lipid transferase activity of CIDEA. In terms of tissue distribution, highly expressed in brown adipose tissue and, at lower levels, in white adipose tissue (at protein level). Undetectable in undifferentiated preadipocytes. Expressed in mammary gland during pregnancy and lactation, in epithelial cells, but not in the surrounding adipose tissue. Secreted into milk via milk fat globules.

The protein resides in the lipid droplet. Its subcellular location is the nucleus. The enzyme catalyses a triacyl-sn-glycerol(in) = a triacyl-sn-glycerol(out). Functionally, lipid transferase that promotes unilocular lipid droplet formation by mediating lipid droplet fusion. Lipid droplet fusion promotes their enlargement, restricting lipolysis and favoring lipid storage. Localizes on the lipid droplet surface, at focal contact sites between lipid droplets, and mediates atypical lipid droplet fusion by promoting directional net neutral lipid transfer from the smaller to larger lipid droplets. The transfer direction may be driven by the internal pressure difference between the contacting lipid droplet pair and occurs at a lower rate than that promoted by CIDEC. May also act as a CEBPB coactivator in epithelial cells to control the expression of a subset of CEBPB downstream target genes, including ID2, IGF1, PRLR, SOCS1, SOCS3, XDH, but not casein. By interacting with CEBPB, strengthens the association of CEBPB with the XDH promoter, increases histone acetylation and dissociates HDAC1 from the promoter. When overexpressed, induces apoptosis; the physiological significance of its role in apoptosis is unclear. The chain is Lipid transferase CIDEA from Mus musculus (Mouse).